A 96-amino-acid polypeptide reads, in one-letter code: Small ribosomal subunit protein bS20 (96 aa).

Belongs to the bacterial ribosomal protein bS20 family.

Its function is as follows. Binds directly to 16S ribosomal RNA. The polypeptide is Small ribosomal subunit protein bS20 (Thermotoga petrophila (strain ATCC BAA-488 / DSM 13995 / JCM 10881 / RKU-1)).